The chain runs to 445 residues: Ribosome biogenesis protein YTM1 (445 aa).

Residues 8 to 89 (VKVKFFTREQ…EAVLNVEYTR (82 aa)) form a ubiquitin-like (UBL) domain region. The interval 99–445 (SFSNEDWVSA…FNKGDNIFKN (347 aa)) is sufficient for interaction with ERB1 and association with 66S pre-ribosomes. WD repeat units follow at residues 101-138 (SNEDWVSALDVGAERIVSGSYDGVVRTWNLSGKIEKQY), 140-178 (GHTGAVRAVKFISSTRLVSGGNDRTLRLWKTKNDDVKHV), 195-232 (GHQAPVVSVDVQGDRILSASYDNSIGFWSTNHKDMTAV), 270-310 (SHKA…CVDT), 312-351 (STSYSLLSMVELPKLRLLACGSSARHITLHDPRADSSAKI), 358-398 (GHKN…SIYT), and 409-445 (GINDKVFAVKWAKGVGIISGGQDKKIQFNKGDNIFKN).

The protein belongs to the WD repeat WDR12/YTM1 family. Component of the NOP7 complex, composed of ERB1, NOP7 and YTM1. The complex is held together by ERB1, which interacts with NOP7 via its N-terminal domain and with YTM1 via a high-affinity interaction between the seven-bladed beta-propeller domains of the 2 proteins. The NOP7 complex associates with the 66S pre-ribosome. Interacts (via UBL domain) with MDN1 (via VWFA/MIDAS domain).

The protein resides in the nucleus. Its subcellular location is the nucleolus. The protein localises to the nucleoplasm. Its function is as follows. Component of the NOP7 complex, which is required for maturation of the 25S and 5.8S ribosomal RNAs and formation of the 60S ribosome. The protein is Ribosome biogenesis protein YTM1 of Eremothecium gossypii (strain ATCC 10895 / CBS 109.51 / FGSC 9923 / NRRL Y-1056) (Yeast).